A 249-amino-acid chain; its full sequence is Acetylglutamate kinase (249 aa).

Residues 42–43, arginine 64, and asparagine 155 contribute to the substrate site; that span reads GG.

This sequence belongs to the acetylglutamate kinase family. ArgB subfamily.

Its subcellular location is the cytoplasm. It catalyses the reaction N-acetyl-L-glutamate + ATP = N-acetyl-L-glutamyl 5-phosphate + ADP. It participates in amino-acid biosynthesis; L-arginine biosynthesis; N(2)-acetyl-L-ornithine from L-glutamate: step 2/4. Its function is as follows. Catalyzes the ATP-dependent phosphorylation of N-acetyl-L-glutamate. The protein is Acetylglutamate kinase of Endomicrobium trichonymphae.